Reading from the N-terminus, the 898-residue chain is DNA-directed DNA polymerase (898 aa).

Residues 101-337 (YDRKFVRVAN…VQAIDKIRGF (237 aa)) form a 3'-5'exonuclease region. Mg(2+) contacts are provided by Asp-112, Glu-114, and Asp-219. Positions 245–261 (VKSKLIQNMYGSKEIYS) are beta hairpin. Mg(2+)-binding residues include Asp-324, Asp-408, and Leu-409. The polymerase stretch occupies residues 377 to 898 (IPQQGSHVKQ…EKASLDFLFG (522 aa)). Substrate contacts are provided by residues 411-413 (SLY), Arg-479, and Lys-557. Asp-620 contributes to the Mg(2+) binding site. Residues 702–705 (KKRY) are binding of DNA in B-conformation. The tract at residues 893–898 (LDFLFG) is interaction with the polymerase clamp.

It belongs to the DNA polymerase type-B family. As to quaternary structure, interacts with the polymerase clamp; this interaction constitutes the polymerase holoenzyme. Interacts with the helicase assembly factor. Part of the replicase complex that includes the DNA polymerase, the polymerase clamp, the clamp loader complex, the single-stranded DNA binding protein, the primase, the helicase and the helicase assembly factor. Requires Mg(2+) as cofactor.

It catalyses the reaction DNA(n) + a 2'-deoxyribonucleoside 5'-triphosphate = DNA(n+1) + diphosphate. Its function is as follows. Replicates the viral genomic DNA. This polymerase possesses two enzymatic activities: DNA synthesis (polymerase) and an exonucleolytic activity that degrades single-stranded DNA in the 3'- to 5'-direction for proofreading purpose. This chain is DNA-directed DNA polymerase (43), found in Enterobacteria phage T4 (Bacteriophage T4).